A 260-amino-acid chain; its full sequence is 3'-5' ssDNA/RNA exonuclease TatD (260 aa).

A divalent metal cation-binding residues include glutamate 91, histidine 127, and histidine 152.

This sequence belongs to the metallo-dependent hydrolases superfamily. TatD-type hydrolase family. TatD subfamily. Monomer. Requires Mg(2+) as cofactor. It depends on Mn(2+) as a cofactor.

Its subcellular location is the cytoplasm. In terms of biological role, 3'-5' exonuclease that prefers single-stranded DNA and RNA. May play a role in the H(2)O(2)-induced DNA damage repair. The chain is 3'-5' ssDNA/RNA exonuclease TatD from Escherichia coli (strain K12).